A 493-amino-acid chain; its full sequence is Alpha-amylase-related protein (493 aa).

An N-terminal signal peptide occupies residues 1 to 19 (MFKFALTQTLCLAGSLSLA). Gln20 carries the pyrrolidone carboxylic acid modification. Cys47 and Cys103 are oxidised to a cystine. Ca(2+) is bound by residues Asn117, Gln168, and Asp177. Residues Cys156 and Cys170 are joined by a disulfide bond. Arg205 provides a ligand contact to chloride. Catalysis depends on Asp207, which acts as the Nucleophile. Residue His211 coordinates Ca(2+). The Proton donor role is filled by Glu244. Chloride contacts are provided by Asn307 and Arg342. 3 disulfides stabilise this stretch: Cys375/Cys381, Cys417/Cys440, and Cys447/Cys459.

The protein belongs to the glycosyl hydrolase 13 family. In terms of assembly, monomer. Ca(2+) is required as a cofactor. Requires chloride as cofactor.

The protein localises to the secreted. It carries out the reaction Endohydrolysis of (1-&gt;4)-alpha-D-glucosidic linkages in polysaccharides containing three or more (1-&gt;4)-alpha-linked D-glucose units.. This Drosophila mauritiana (Fruit fly) protein is Alpha-amylase-related protein (Amyrel).